We begin with the raw amino-acid sequence, 225 residues long: Insulin-induced gene 2 protein (225 aa).

Residues 1–28 (MAENDAKPTLPKKSGPYISSVTSHGMNL) lie on the Cytoplasmic side of the membrane. The chain crosses the membrane as a helical span at residues 29–51 (VIRGIVLFFIGVFLALVLNLLQI). Topologically, residues 52-70 (QRNVTLFPPDVITSIFSSA) are lumenal. The helical transmembrane segment at 71–88 (WWVPPCCGTASAVIGLLY) threads the bilayer. Topologically, residues 89-103 (PCMDRHLGEPHKFKR) are cytoplasmic. Residues 104–126 (EWSSVMRCVAVFVGINHASAKVD) form a helical membrane-spanning segment. At 127 to 129 (FAN) the chain is on the lumenal side. The helical transmembrane segment at 130–148 (NIQLSLTLAALSIGLWWTF) threads the bilayer. Over 149–153 (DRSRS) the chain is Cytoplasmic. Residues 154–175 (GFGLGVGIAFLATLVSQLLVYN) form a helical membrane-spanning segment. At 176-189 (GVYQYTSPDFLYVR) the chain is on the lumenal side. The helical transmembrane segment at 190–207 (SWLPCIFFAGGITMGNIG) threads the bilayer. At 208–225 (RQLAMYECKVIAEKSHED) the chain is on the cytoplasmic side. Positions 219 to 225 (AEKSHED) match the KxHxx motif.

It belongs to the INSIG family. As to quaternary structure, interacts with SCAP; interaction is direct and only takes place in the presence of sterols; it prevents interaction between SCAP and the coat protein complex II (COPII). Associates with the SCAP-SREBP complex; association is mediated via its interaction with SCAP and only takes place in the presence of sterols.

The protein resides in the endoplasmic reticulum membrane. Oxysterol-binding protein that mediates feedback control of cholesterol synthesis by controlling both endoplasmic reticulum to Golgi transport of SCAP and degradation of HMGCR. Acts as a negative regulator of cholesterol biosynthesis by mediating the retention of the SCAP-SREBP complex in the endoplasmic reticulum, thereby blocking the processing of sterol regulatory element-binding proteins (SREBPs). Binds oxysterol, including 22-hydroxycholesterol, 24-hydroxycholesterol, 25-hydroxycholesterol and 27-hydroxycholesterol, regulating interaction with SCAP and retention of the SCAP-SREBP complex in the endoplasmic reticulum. In presence of oxysterol, interacts with SCAP, retaining the SCAP-SREBP complex in the endoplasmic reticulum, thereby preventing SCAP from escorting SREBPs to the Golgi. Sterol deprivation reduces oxysterol-binding, disrupting the interaction between INSIG2 and SCAP, thereby promoting Golgi transport of the SCAP-SREBP complex, followed by processing and nuclear translocation of SREBPs. Also regulates cholesterol synthesis by regulating degradation of HMGCR. The polypeptide is Insulin-induced gene 2 protein (Gallus gallus (Chicken)).